A 233-amino-acid chain; its full sequence is Large ribosomal subunit protein uL22m (233 aa).

Belongs to the universal ribosomal protein uL22 family. As to quaternary structure, component of the mitochondrial ribosome large subunit (39S) which comprises a 16S rRNA and about 50 distinct proteins.

It localises to the mitochondrion. This chain is Large ribosomal subunit protein uL22m (mRpL22), found in Drosophila melanogaster (Fruit fly).